The following is a 107-amino-acid chain: UPF0145 protein LVIS_1527 (107 aa).

Belongs to the UPF0145 family.

In Levilactobacillus brevis (strain ATCC 367 / BCRC 12310 / CIP 105137 / JCM 1170 / LMG 11437 / NCIMB 947 / NCTC 947) (Lactobacillus brevis), this protein is UPF0145 protein LVIS_1527.